Here is a 106-residue protein sequence, read N- to C-terminus: Thiosulfate sulfurtransferase GlpE (106 aa).

One can recognise a Rhodanese domain in the interval 17-105 (EQNEARLVDI…SYRAELPVIA (89 aa)). Cysteine 65 functions as the Cysteine persulfide intermediate in the catalytic mechanism.

This sequence belongs to the GlpE family.

It is found in the cytoplasm. The enzyme catalyses thiosulfate + hydrogen cyanide = thiocyanate + sulfite + 2 H(+). The catalysed reaction is thiosulfate + [thioredoxin]-dithiol = [thioredoxin]-disulfide + hydrogen sulfide + sulfite + 2 H(+). In terms of biological role, transferase that catalyzes the transfer of sulfur from thiosulfate to thiophilic acceptors such as cyanide or dithiols. May function in a CysM-independent thiosulfate assimilation pathway by catalyzing the conversion of thiosulfate to sulfite, which can then be used for L-cysteine biosynthesis. The chain is Thiosulfate sulfurtransferase GlpE from Vibrio atlanticus (strain LGP32) (Vibrio splendidus (strain Mel32)).